The chain runs to 265 residues: Thiazole synthase (265 aa).

The active-site Schiff-base intermediate with DXP is K107. Residues G168, 194–195 (AG), and 216–217 (NT) each bind 1-deoxy-D-xylulose 5-phosphate.

The protein belongs to the ThiG family. As to quaternary structure, homotetramer. Forms heterodimers with either ThiH or ThiS.

Its subcellular location is the cytoplasm. It catalyses the reaction [ThiS sulfur-carrier protein]-C-terminal-Gly-aminoethanethioate + 2-iminoacetate + 1-deoxy-D-xylulose 5-phosphate = [ThiS sulfur-carrier protein]-C-terminal Gly-Gly + 2-[(2R,5Z)-2-carboxy-4-methylthiazol-5(2H)-ylidene]ethyl phosphate + 2 H2O + H(+). It functions in the pathway cofactor biosynthesis; thiamine diphosphate biosynthesis. In terms of biological role, catalyzes the rearrangement of 1-deoxy-D-xylulose 5-phosphate (DXP) to produce the thiazole phosphate moiety of thiamine. Sulfur is provided by the thiocarboxylate moiety of the carrier protein ThiS. In vitro, sulfur can be provided by H(2)S. This chain is Thiazole synthase, found in Pseudomonas paraeruginosa (strain DSM 24068 / PA7) (Pseudomonas aeruginosa (strain PA7)).